Reading from the N-terminus, the 426-residue chain is Branched-chain amino acid permease BrnQ (426 aa).

12 consecutive transmembrane segments (helical) span residues L11–L31, I41–L61, I76–P96, N111–W131, L140–V160, G186–F206, V219–I239, I268–A288, L296–V316, V324–F344, T358–L378, and M390–W410.

This sequence belongs to the branched chain amino acid transporter family.

It is found in the cell membrane. Functionally, branched chain amino acid transport system, which transports isoleucine. The polypeptide is Branched-chain amino acid permease BrnQ (Corynebacterium glutamicum (strain ATCC 13032 / DSM 20300 / JCM 1318 / BCRC 11384 / CCUG 27702 / LMG 3730 / NBRC 12168 / NCIMB 10025 / NRRL B-2784 / 534)).